The sequence spans 404 residues: Phosphopentomutase (404 aa).

Aspartate 10, aspartate 303, histidine 308, aspartate 344, histidine 345, and histidine 356 together coordinate Mn(2+).

It belongs to the phosphopentomutase family. The cofactor is Mn(2+).

Its subcellular location is the cytoplasm. It catalyses the reaction 2-deoxy-alpha-D-ribose 1-phosphate = 2-deoxy-D-ribose 5-phosphate. The enzyme catalyses alpha-D-ribose 1-phosphate = D-ribose 5-phosphate. Its pathway is carbohydrate degradation; 2-deoxy-D-ribose 1-phosphate degradation; D-glyceraldehyde 3-phosphate and acetaldehyde from 2-deoxy-alpha-D-ribose 1-phosphate: step 1/2. Isomerase that catalyzes the conversion of deoxy-ribose 1-phosphate (dRib-1-P) and ribose 1-phosphate (Rib-1-P) to deoxy-ribose 5-phosphate (dRib-5-P) and ribose 5-phosphate (Rib-5-P), respectively. In Shewanella putrefaciens (strain CN-32 / ATCC BAA-453), this protein is Phosphopentomutase.